The chain runs to 368 residues: Ribosomal RNA large subunit methyltransferase M (368 aa).

Residues Ser-189, 222–225 (CPGG), Asp-241, Asp-261, and Asp-278 each bind S-adenosyl-L-methionine. The Proton acceptor role is filled by Lys-307.

The protein belongs to the class I-like SAM-binding methyltransferase superfamily. RNA methyltransferase RlmE family. RlmM subfamily. As to quaternary structure, monomer.

It localises to the cytoplasm. The catalysed reaction is cytidine(2498) in 23S rRNA + S-adenosyl-L-methionine = 2'-O-methylcytidine(2498) in 23S rRNA + S-adenosyl-L-homocysteine + H(+). Catalyzes the 2'-O-methylation at nucleotide C2498 in 23S rRNA. The protein is Ribosomal RNA large subunit methyltransferase M of Yersinia enterocolitica serotype O:8 / biotype 1B (strain NCTC 13174 / 8081).